We begin with the raw amino-acid sequence, 1193 residues long: Probable cation-transporting ATPase 13A4 (1193 aa).

At 1 to 32 the chain is on the cytoplasmic side; the sequence is MGDHLEKSQHALLNEGDENEMEIFGYRTQGCR. Residues 33-53 lie within the membrane without spanning it; it reads KALCLIGSIFSLGMLPLVFYW. Residues 54 to 198 are Cytoplasmic-facing; that stretch reads RPAWRVWANC…DVEITPIWKL (145 aa). A helical transmembrane segment spans residues 199–219; that stretch reads LIKEVLNPFYIFQLFSVCLWF. Topologically, residues 220-224 are lumenal; that stretch reads SEDYK. Residues 225–245 form a helical membrane-spanning segment; the sequence is EYALAIILMSVISIALTVYDL. Topologically, residues 246-401 are cytoplasmic; sequence RQQSVKLHHL…NFKLYRDAIR (156 aa). The chain crosses the membrane as a helical span at residues 402 to 422; it reads FLLCLVGTATIGMVYTLCVYV. Over 423–437 the chain is Lumenal; it reads LSGEPPEEVVRKALD. The helical transmembrane segment at 438-458 threads the bilayer; the sequence is VITIAVPPALPAALTTGIIYA. The Cytoplasmic portion of the chain corresponds to 459–901; that stretch reads QRRLKKKGIF…KEGRAALVTS (443 aa). Residue Asp-487 is the 4-aspartylphosphate intermediate of the active site. Mg(2+) contacts are provided by Asp-849 and Asp-853. Residues 902 to 922 traverse the membrane as a helical segment; that stretch reads FCMFKYMALYSMIQYVGVLLL. Residues 923-933 lie on the Lumenal side of the membrane; it reads YWKTNSLSNYQ. A helical membrane pass occupies residues 934 to 954; that stretch reads FLFQDLAITTLIGVTMNLNGA. Over 955 to 973 the chain is Cytoplasmic; that stretch reads NPKLVPFRPAGRLISPPLL. The helical transmembrane segment at 974–994 threads the bilayer; that stretch reads LSVVLNILLSLAMHIVGFILV. Residues 995 to 1036 lie on the Lumenal side of the membrane; that stretch reads QKQPWYIMDYHSVCPVRNESASALAASPSVPEKTRSNSTFAS. The chain crosses the membrane as a helical span at residues 1037 to 1057; the sequence is FENTTIWFLGTINCIFVALVF. The Cytoplasmic segment spans residues 1058–1071; sequence SKGKPFRQPTYTNY. The chain crosses the membrane as a helical span at residues 1072-1092; it reads IFVLVLILQMGVCLFILFADI. Over 1093–1105 the chain is Lumenal; it reads PEMHRRLDLLCTP. The helical transmembrane segment at 1106 to 1126 threads the bilayer; sequence VLWRVYILIMISSNFVVSLAV. The Cytoplasmic portion of the chain corresponds to 1127-1193; it reads EKAIIENRAL…PVFESNEEQL (67 aa).

It belongs to the cation transport ATPase (P-type) (TC 3.A.3) family. Type V subfamily. In terms of tissue distribution, expressed in brain and stomach.

It is found in the early endosome membrane. The protein resides in the late endosome membrane. It localises to the recycling endosome membrane. It carries out the reaction ATP + H2O = ADP + phosphate + H(+). In Mus musculus (Mouse), this protein is Probable cation-transporting ATPase 13A4 (Atp13a4).